The following is a 244-amino-acid chain: Osmotin-like protein OSM34 (244 aa).

A signal peptide spans 1–22 (MANLLVSTFIFSALLLISTATA). Disulfide bonds link cysteine 31/cysteine 222, cysteine 72/cysteine 82, cysteine 87/cysteine 93, cysteine 138/cysteine 212, cysteine 143/cysteine 195, cysteine 151/cysteine 161, cysteine 165/cysteine 174, and cysteine 175/cysteine 182.

This sequence belongs to the thaumatin family.

The chain is Osmotin-like protein OSM34 (OSM34) from Arabidopsis thaliana (Mouse-ear cress).